Consider the following 104-residue polypeptide: Integration host factor subunit alpha (104 aa).

Belongs to the bacterial histone-like protein family. In terms of assembly, heterodimer of an alpha and a beta chain.

Its function is as follows. This protein is one of the two subunits of integration host factor, a specific DNA-binding protein that functions in genetic recombination as well as in transcriptional and translational control. The protein is Integration host factor subunit alpha of Methylobacterium sp. (strain 4-46).